The following is a 428-amino-acid chain: GTPase Obg (428 aa).

An Obg domain is found at 1 to 158 (MFIDEVIITV…IKVKLELKLL (158 aa)). Residues 159-330 (ADVALVGYPS…ILYKTYDMLS (172 aa)) form the OBG-type G domain. Residues 165–172 (GYPSVGKS), 190–194 (FTTLE), 212–215 (DIPG), 282–285 (NKMD), and 311–313 (SVL) contribute to the GTP site. Positions 172 and 192 each coordinate Mg(2+). The 80-residue stretch at 349 to 428 (ELKIEKEDFE…IADVEFEYFE (80 aa)) folds into the OCT domain.

The protein belongs to the TRAFAC class OBG-HflX-like GTPase superfamily. OBG GTPase family. As to quaternary structure, monomer. Mg(2+) is required as a cofactor.

Its subcellular location is the cytoplasm. In terms of biological role, an essential GTPase which binds GTP, GDP and possibly (p)ppGpp with moderate affinity, with high nucleotide exchange rates and a fairly low GTP hydrolysis rate. Plays a role in control of the cell cycle, stress response, ribosome biogenesis and in those bacteria that undergo differentiation, in morphogenesis control. This is GTPase Obg from Fusobacterium nucleatum subsp. nucleatum (strain ATCC 25586 / DSM 15643 / BCRC 10681 / CIP 101130 / JCM 8532 / KCTC 2640 / LMG 13131 / VPI 4355).